A 549-amino-acid polypeptide reads, in one-letter code: Chaperonin GroEL 2 (549 aa).

ATP contacts are provided by residues 30–33 (TLGP), K51, 87–91 (DGTTT), G415, 479–481 (NAA), and D495.

It belongs to the chaperonin (HSP60) family. In terms of assembly, forms a cylinder of 14 subunits composed of two heptameric rings stacked back-to-back. Interacts with the co-chaperonin GroES.

It localises to the cytoplasm. It carries out the reaction ATP + H2O + a folded polypeptide = ADP + phosphate + an unfolded polypeptide.. Together with its co-chaperonin GroES, plays an essential role in assisting protein folding. The GroEL-GroES system forms a nano-cage that allows encapsulation of the non-native substrate proteins and provides a physical environment optimized to promote and accelerate protein folding. The polypeptide is Chaperonin GroEL 2 (Polaromonas naphthalenivorans (strain CJ2)).